Consider the following 180-residue polypeptide: Shikimate kinase (180 aa).

14–19 lines the ATP pocket; sequence GAGKSS. Serine 18 is a binding site for Mg(2+). Substrate contacts are provided by aspartate 36, arginine 60, and glycine 82. Residue arginine 120 coordinates ATP. Residue arginine 139 participates in substrate binding.

The protein belongs to the shikimate kinase family. Monomer. Mg(2+) serves as cofactor.

Its subcellular location is the cytoplasm. It carries out the reaction shikimate + ATP = 3-phosphoshikimate + ADP + H(+). The protein operates within metabolic intermediate biosynthesis; chorismate biosynthesis; chorismate from D-erythrose 4-phosphate and phosphoenolpyruvate: step 5/7. Functionally, catalyzes the specific phosphorylation of the 3-hydroxyl group of shikimic acid using ATP as a cosubstrate. This chain is Shikimate kinase, found in Xylella fastidiosa (strain M12).